Here is a 251-residue protein sequence, read N- to C-terminus: Homeobox protein notochord (251 aa).

The segment covering 1–14 (MPSPRPRGSPPPAP) has biased composition (pro residues). Residues 1–47 (MPSPRPRGSPPPAPSGSRVRPPRSGRSPAPRSPTGPNTPRAPGRFES) are disordered. Residues 15-35 (SGSRVRPPRSGRSPAPRSPTG) show a composition bias toward low complexity. Residues 156–215 (QKRVRTMFNLEQLEELEKVFAKQHNLVGKKRAQLAARLKLTENQVRVWFQNRRVKYQKQQ) constitute a DNA-binding region (homeobox). Positions 224–242 (AEAASLDEPSSSSIASIQS) are enriched in low complexity. Positions 224 to 251 (AEAASLDEPSSSSIASIQSDDAESGVDG) are disordered.

The protein resides in the nucleus. Transcription regulator acting downstream of both FOXA2 and Brachyury (T) during notochord development. Required for node morphogenesis. Is essential for cilia formation in the posterior notochord (PNC) and for left-right patterning; acts upstream of FOXJ1 and RFX3 in this process and is required for the expression of various components important for axonemal assembly and function. Plays a role in regulating axial versus paraxial cell fate. Activates the transcription of ciliary proteins C11orf97 homolog, FAM183B and SPACA9 in the embryonic ventral node. This is Homeobox protein notochord (NOTO) from Homo sapiens (Human).